Here is a 1175-residue protein sequence, read N- to C-terminus: DNA-directed RNA polymerase subunit beta (1175 aa).

The segment at 12–33 (QSKTDRPQSSSNGSSSLNGSVP) is disordered. Residues 20–31 (SSSNGSSSLNGS) are compositionally biased toward low complexity.

This sequence belongs to the RNA polymerase beta chain family. In terms of assembly, the RNAP catalytic core consists of 2 alpha, 1 beta, 1 beta' and 1 omega subunit. When a sigma factor is associated with the core the holoenzyme is formed, which can initiate transcription.

It carries out the reaction RNA(n) + a ribonucleoside 5'-triphosphate = RNA(n+1) + diphosphate. DNA-dependent RNA polymerase catalyzes the transcription of DNA into RNA using the four ribonucleoside triphosphates as substrates. In Mycobacterium avium (strain 104), this protein is DNA-directed RNA polymerase subunit beta.